The following is a 289-amino-acid chain: Eukaryotic translation initiation factor 3 subunit G (289 aa).

Positions 1-33 (MSRPTKADWADDEEFDDPSALPPQQITTNKDGT) are disordered. In terms of domain architecture, RRM spans 209-287 (ATLRVTNVSE…LILRVEFAKR (79 aa)).

This sequence belongs to the eIF-3 subunit G family. In terms of assembly, component of the eukaryotic translation initiation factor 3 (eIF-3) complex.

The protein localises to the cytoplasm. Functionally, RNA-binding component of the eukaryotic translation initiation factor 3 (eIF-3) complex, which is involved in protein synthesis of a specialized repertoire of mRNAs and, together with other initiation factors, stimulates binding of mRNA and methionyl-tRNAi to the 40S ribosome. The eIF-3 complex specifically targets and initiates translation of a subset of mRNAs involved in cell proliferation. This subunit can bind 18S rRNA. This chain is Eukaryotic translation initiation factor 3 subunit G (tif35), found in Emericella nidulans (strain FGSC A4 / ATCC 38163 / CBS 112.46 / NRRL 194 / M139) (Aspergillus nidulans).